Consider the following 67-residue polypeptide: MQVLVRDNNVDQALKALKKKMQREGIFREMKLRRHFEKPSERKAREAAEAVRRARKLERKRLEREGF.

Belongs to the bacterial ribosomal protein bS21 family.

The sequence is that of Small ribosomal subunit protein bS21 from Granulibacter bethesdensis (strain ATCC BAA-1260 / CGDNIH1).